Reading from the N-terminus, the 382-residue chain is Protein phosphatase 1A (382 aa).

Gly2 carries the N-myristoyl glycine lipid modification. Residues 23–291 (RYGLSSMQGW…DNMSVILICF (269 aa)) form the PPM-type phosphatase domain. Mn(2+) contacts are provided by Asp60, Gly61, Asp239, and Asp282. Phosphoserine occurs at positions 375 and 377.

This sequence belongs to the PP2C family. Monomer. Interacts with SMAD2; the interaction dephosphorylates SMAD2 in its C-terminal SXS motif resulting in disruption of the SMAD2/SMAD4 complex, SMAD2 nuclear export and termination of the TGF-beta-mediated signaling. Interacts with SMAD2; the interaction dephosphorylates SMAD2 in its C-terminal SXS motif resulting in disruption of the SMAD2/SMAD4 complex, SMAD2 nuclear export and termination of the TGF-beta-mediated signaling. Interacts with the phosphorylated form of IKBKB/IKKB. Mg(2+) is required as a cofactor. Requires Mn(2+) as cofactor. Post-translationally, N-myristoylation is essential for the recognition of its substrates for dephosphorylation.

Its subcellular location is the nucleus. The protein localises to the cytoplasm. It localises to the cytosol. The protein resides in the membrane. It catalyses the reaction O-phospho-L-seryl-[protein] + H2O = L-seryl-[protein] + phosphate. The enzyme catalyses O-phospho-L-threonyl-[protein] + H2O = L-threonyl-[protein] + phosphate. Its function is as follows. Enzyme with a broad specificity. Negatively regulates TGF-beta signaling through dephosphorylating SMAD2 and SMAD3, resulting in their dissociation from SMAD4, nuclear export of the SMADs and termination of the TGF-beta-mediated signaling. Dephosphorylates PRKAA1 and PRKAA2. Plays an important role in the termination of TNF-alpha-mediated NF-kappa-B activation through dephosphorylating and inactivating IKBKB/IKKB. In Mus musculus (Mouse), this protein is Protein phosphatase 1A (Ppm1a).